The primary structure comprises 354 residues: Protein RecA (354 aa).

65–72 (GPESSGKT) contacts ATP.

Belongs to the RecA family.

It is found in the cytoplasm. Functionally, can catalyze the hydrolysis of ATP in the presence of single-stranded DNA, the ATP-dependent uptake of single-stranded DNA by duplex DNA, and the ATP-dependent hybridization of homologous single-stranded DNAs. It interacts with LexA causing its activation and leading to its autocatalytic cleavage. This Pseudomonas savastanoi pv. phaseolicola (strain 1448A / Race 6) (Pseudomonas syringae pv. phaseolicola (strain 1448A / Race 6)) protein is Protein RecA.